The chain runs to 518 residues: Chaperonin GroEL (518 aa).

ATP contacts are provided by residues 30–33 (TLGP), K51, 87–91 (DGTTT), and G415.

This sequence belongs to the chaperonin (HSP60) family. In terms of assembly, forms a cylinder of 14 subunits composed of two heptameric rings stacked back-to-back. Interacts with the co-chaperonin GroES.

The protein resides in the cytoplasm. The enzyme catalyses ATP + H2O + a folded polypeptide = ADP + phosphate + an unfolded polypeptide.. Its function is as follows. Together with its co-chaperonin GroES, plays an essential role in assisting protein folding. The GroEL-GroES system forms a nano-cage that allows encapsulation of the non-native substrate proteins and provides a physical environment optimized to promote and accelerate protein folding. This Desulfotalea psychrophila (strain LSv54 / DSM 12343) protein is Chaperonin GroEL.